The following is a 429-amino-acid chain: Enolase (429 aa).

Glutamine 163 is a binding site for (2R)-2-phosphoglycerate. Glutamate 205 serves as the catalytic Proton donor. Mg(2+) contacts are provided by aspartate 242, glutamate 287, and aspartate 314. Residues lysine 339, arginine 368, serine 369, and lysine 390 each coordinate (2R)-2-phosphoglycerate. The active-site Proton acceptor is lysine 339.

Belongs to the enolase family. The cofactor is Mg(2+).

The protein resides in the cytoplasm. It localises to the secreted. The protein localises to the cell surface. The enzyme catalyses (2R)-2-phosphoglycerate = phosphoenolpyruvate + H2O. It functions in the pathway carbohydrate degradation; glycolysis; pyruvate from D-glyceraldehyde 3-phosphate: step 4/5. In terms of biological role, catalyzes the reversible conversion of 2-phosphoglycerate (2-PG) into phosphoenolpyruvate (PEP). It is essential for the degradation of carbohydrates via glycolysis. The protein is Enolase of Magnetococcus marinus (strain ATCC BAA-1437 / JCM 17883 / MC-1).